A 250-amino-acid polypeptide reads, in one-letter code: Hemocyanin, units C and D (250 aa).

Histidine 1 serves as a coordination point for Cu cation. Residues 1–106 (HGSTKWCPSP…RAWIEPVTSA (106 aa)) are unit C. The cysteines at positions 7 and 18 are disulfide-linked. The 2'-(S-cysteinyl)-histidine (Cys-His) cross-link spans 19–21 (CHH). Cu cation-binding residues include histidine 21 and histidine 143. The unit D stretch occupies residues 107-250 (VRIRKNLNDL…DAQDVIYNNH (144 aa)). An intrachain disulfide couples cysteine 149 to cysteine 160. A cross-link (2'-(S-cysteinyl)-histidine (Cys-His)) is located at residues 161–163 (CLH). Histidine 172 lines the Cu cation pocket.

This sequence belongs to the tyrosinase family. Hemocyanin subfamily. As to quaternary structure, decamers of large identical subunits (390 kDa), each containing 8 globular oxygen-binding functional units. Cu(2+) serves as cofactor.

In terms of biological role, hemocyanins are copper-containing oxygen carriers occurring freely dissolved in the hemolymph of many mollusks and arthropods. In Sepia officinalis (Common cuttlefish), this protein is Hemocyanin, units C and D.